The following is a 128-amino-acid chain: Aspartate 1-decarboxylase (128 aa).

S25 functions as the Schiff-base intermediate with substrate; via pyruvic acid in the catalytic mechanism. At S25 the chain carries Pyruvic acid (Ser). Position 57 (T57) interacts with substrate. Catalysis depends on Y58, which acts as the Proton donor. Residue 73 to 75 (GAA) participates in substrate binding.

Belongs to the PanD family. As to quaternary structure, heterooctamer of four alpha and four beta subunits. Requires pyruvate as cofactor. Is synthesized initially as an inactive proenzyme, which is activated by self-cleavage at a specific serine bond to produce a beta-subunit with a hydroxyl group at its C-terminus and an alpha-subunit with a pyruvoyl group at its N-terminus.

It is found in the cytoplasm. The catalysed reaction is L-aspartate + H(+) = beta-alanine + CO2. Its pathway is cofactor biosynthesis; (R)-pantothenate biosynthesis; beta-alanine from L-aspartate: step 1/1. Functionally, catalyzes the pyruvoyl-dependent decarboxylation of aspartate to produce beta-alanine. This Caldicellulosiruptor bescii (strain ATCC BAA-1888 / DSM 6725 / KCTC 15123 / Z-1320) (Anaerocellum thermophilum) protein is Aspartate 1-decarboxylase.